Consider the following 1043-residue polypeptide: Sucrose-phosphate synthase 1 (1043 aa).

Positions 95–117 are enriched in basic and acidic residues; sequence EEKEAQRLAKRRLEREKGRREAT. The segment at 95–127 is disordered; the sequence is EEKEAQRLAKRRLEREKGRREATADMSEEFSEG. Ser-121, Ser-125, Ser-152, and Ser-155 each carry phosphoserine. Residues 670–693 form a disordered region; the sequence is PRHPQWQSDDGGDNSEPESPSDSL.

Belongs to the glycosyltransferase 1 family. Homodimer or homotetramer. In terms of processing, phosphorylated at Ser-152 upon sucrose supply. Expressed in seeds, stems, rosette leaves, flowers and siliques. Highly expressed in maturing nectaries.

The catalysed reaction is beta-D-fructose 6-phosphate + UDP-alpha-D-glucose = sucrose 6(F)-phosphate + UDP + H(+). It participates in glycan biosynthesis; sucrose biosynthesis; sucrose from D-fructose 6-phosphate and UDP-alpha-D-glucose: step 1/2. Its activity is regulated as follows. Activity is regulated by phosphorylation and moderated by concentration of metabolites and light. In terms of biological role, plays a major role in photosynthetic sucrose synthesis by catalyzing the rate-limiting step of sucrose biosynthesis from UDP-glucose and fructose- 6-phosphate. Involved in the regulation of carbon partitioning in the leaves of plants. May regulate the synthesis of sucrose and therefore play a major role as a limiting factor in the export of photoassimilates out of the leaf. Plays a role for sucrose availability that is essential for plant growth and fiber elongation. Required for nectar secretion. The polypeptide is Sucrose-phosphate synthase 1 (SPS1) (Arabidopsis thaliana (Mouse-ear cress)).